Reading from the N-terminus, the 334-residue chain is Cytoskeleton protein RodZ (334 aa).

At 1–111 the chain is on the cytoplasmic side; it reads MNTEATHDQN…LGKRRKKRDG (111 aa). Positions 19–71 constitute an HTH cro/C1-type domain; sequence LRNAREQLGLSQQAVAERLCLKVSTVRDIEEDKAPSDLASTFLRGYIRSYARL. The H-T-H motif DNA-binding region spans 30–49; sequence QQAVAERLCLKVSTVRDIEE. Residues 112–132 traverse the membrane as a helical; Signal-anchor for type II membrane protein segment; sequence WLMSFTWLVLFVVVGLTGAWW. The Periplasmic segment spans residues 133-334; the sequence is WQNHKAHQEE…TLNAEPTPAQ (202 aa). The tract at residues 152–210 is disordered; it reads AGLNADKDSGQSVPLDTGAVTSQDTTPAQTAPAPATPVDSTAATQTPAPTAAATQNTVV. Residues 161 to 175 are compositionally biased toward polar residues; it reads GQSVPLDTGAVTSQD. Over residues 176–210 the composition is skewed to low complexity; that stretch reads TTPAQTAPAPATPVDSTAATQTPAPTAAATQNTVV.

The protein belongs to the RodZ family.

The protein localises to the cell inner membrane. Its function is as follows. Cytoskeletal protein that is involved in cell-shape control through regulation of the length of the long axis. This Salmonella gallinarum (strain 287/91 / NCTC 13346) protein is Cytoskeleton protein RodZ.